An 870-amino-acid chain; its full sequence is Translation initiation factor IF-2 (870 aa).

A disordered region spans residues 49 to 284; the sequence is SFQNSAPAEK…TKRKERPLPE (236 aa). 2 stretches are compositionally biased toward basic and acidic residues: residues 70–81 and 94–109; these read RKNEKKQEDNAG and QNND…RDHS. Residues 116 to 127 are compositionally biased toward low complexity; it reads KPKAAALLQQFK. Composition is skewed to basic and acidic residues over residues 144–159 and 168–183; these read AKKE…KKEQ and NKES…EKKV. The segment covering 254–279 has biased composition (basic residues); it reads RKRRKNKNKKRKQEQKPKKQITKRKE. A tr-type G domain is found at 371 to 540; that stretch reads KRPPVVTIMG…LLQADMMELK (170 aa). Residues 380-387 are G1; that stretch reads GHVDHGKT. 380 to 387 is a GTP binding site; that stretch reads GHVDHGKT. Residues 405–409 form a G2 region; sequence GITQK. Residues 426–429 form a G3 region; sequence DTPG. GTP contacts are provided by residues 426-430 and 480-483; these read DTPGH and NKMD. Positions 480–483 are G4; it reads NKMD. Residues 516–518 are G5; that stretch reads SAR.

Belongs to the TRAFAC class translation factor GTPase superfamily. Classic translation factor GTPase family. IF-2 subfamily.

The protein resides in the cytoplasm. Functionally, one of the essential components for the initiation of protein synthesis. Protects formylmethionyl-tRNA from spontaneous hydrolysis and promotes its binding to the 30S ribosomal subunits. Also involved in the hydrolysis of GTP during the formation of the 70S ribosomal complex. The protein is Translation initiation factor IF-2 of Lactobacillus helveticus (strain DPC 4571).